Reading from the N-terminus, the 298-residue chain is tRNA dimethylallyltransferase 2 (298 aa).

10-17 (GPTASGKT) contributes to the ATP binding site. 12–17 (TASGKT) lines the substrate pocket. The interaction with substrate tRNA stretch occupies residues 35–38 (DSRQ).

It belongs to the IPP transferase family. In terms of assembly, monomer. Requires Mg(2+) as cofactor.

The catalysed reaction is adenosine(37) in tRNA + dimethylallyl diphosphate = N(6)-dimethylallyladenosine(37) in tRNA + diphosphate. Its function is as follows. Catalyzes the transfer of a dimethylallyl group onto the adenine at position 37 in tRNAs that read codons beginning with uridine, leading to the formation of N6-(dimethylallyl)adenosine (i(6)A). This chain is tRNA dimethylallyltransferase 2, found in Syntrophotalea carbinolica (strain DSM 2380 / NBRC 103641 / GraBd1) (Pelobacter carbinolicus).